We begin with the raw amino-acid sequence, 252 residues long: Imidazole glycerol phosphate synthase subunit HisF (252 aa).

Catalysis depends on residues Asp-11 and Asp-130.

The protein belongs to the HisA/HisF family. Heterodimer of HisH and HisF.

Its subcellular location is the cytoplasm. The enzyme catalyses 5-[(5-phospho-1-deoxy-D-ribulos-1-ylimino)methylamino]-1-(5-phospho-beta-D-ribosyl)imidazole-4-carboxamide + L-glutamine = D-erythro-1-(imidazol-4-yl)glycerol 3-phosphate + 5-amino-1-(5-phospho-beta-D-ribosyl)imidazole-4-carboxamide + L-glutamate + H(+). Its pathway is amino-acid biosynthesis; L-histidine biosynthesis; L-histidine from 5-phospho-alpha-D-ribose 1-diphosphate: step 5/9. In terms of biological role, IGPS catalyzes the conversion of PRFAR and glutamine to IGP, AICAR and glutamate. The HisF subunit catalyzes the cyclization activity that produces IGP and AICAR from PRFAR using the ammonia provided by the HisH subunit. The sequence is that of Imidazole glycerol phosphate synthase subunit HisF from Halothermothrix orenii (strain H 168 / OCM 544 / DSM 9562).